The chain runs to 364 residues: Lipid-A-disaccharide synthase (364 aa).

The protein belongs to the LpxB family.

The catalysed reaction is a lipid X + a UDP-2-N,3-O-bis[(3R)-3-hydroxyacyl]-alpha-D-glucosamine = a lipid A disaccharide + UDP + H(+). The protein operates within bacterial outer membrane biogenesis; LPS lipid A biosynthesis. In terms of biological role, condensation of UDP-2,3-diacylglucosamine and 2,3-diacylglucosamine-1-phosphate to form lipid A disaccharide, a precursor of lipid A, a phosphorylated glycolipid that anchors the lipopolysaccharide to the outer membrane of the cell. This chain is Lipid-A-disaccharide synthase, found in Campylobacter jejuni (strain RM1221).